A 601-amino-acid chain; its full sequence is Probable protein arginine N-methyltransferase 3 (601 aa).

Basic and acidic residues predominate over residues 1–10; sequence MAATMVKHEI. The interval 1–50 is disordered; that stretch reads MAATMVKHEILNYSEDEEENYSDEGDWGDWKADDNGIEGGEEEEEDDGDD. Acidic residues-rich tracts occupy residues 14–27 and 35–50; these read SEDE…EGDW and NGIE…DGDD. A C2H2-type zinc finger spans residues 57-78; it reads CLFCDSHFVSCDLLFEHCRLSH. Residues 242 to 554 enclose the SAM-dependent MTase PRMT-type domain; it reads NENYFGSYSS…NDRREAIGTE (313 aa). S-adenosyl-L-homocysteine-binding residues include Arg264, Gly288, Glu310, Ser312, Val345, and Glu346. Residues Glu365 and Glu374 contribute to the active site.

Belongs to the class I-like SAM-binding methyltransferase superfamily. Protein arginine N-methyltransferase family.

It localises to the cytoplasm. Its subcellular location is the cytosol. It carries out the reaction L-arginyl-[protein] + S-adenosyl-L-methionine = N(omega)-methyl-L-arginyl-[protein] + S-adenosyl-L-homocysteine + H(+). The enzyme catalyses L-arginyl-[protein] + 2 S-adenosyl-L-methionine = N(omega),N(omega)-dimethyl-L-arginyl-[protein] + 2 S-adenosyl-L-homocysteine + 2 H(+). Its function is as follows. Protein-arginine N-methyltransferase that catalyzes both the monomethylation and asymmetric dimethylation of the guanidino nitrogens of arginine residues in target proteins, and therefore falls into the group of type I methyltransferases. The protein is Probable protein arginine N-methyltransferase 3 (PRMT3) of Arabidopsis thaliana (Mouse-ear cress).